The following is a 65-amino-acid chain: Photosystem II reaction center protein Z (65 aa).

2 consecutive transmembrane segments (helical) span residues 11–31 and 44–64; these read LVLA…VIFA and WLAC…DGIF.

This sequence belongs to the PsbZ family. PSII is composed of 1 copy each of membrane proteins PsbA, PsbB, PsbC, PsbD, PsbE, PsbF, PsbH, PsbI, PsbJ, PsbK, PsbL, PsbM, PsbT, PsbY, PsbZ, Psb30/Ycf12, at least 3 peripheral proteins of the oxygen-evolving complex and a large number of cofactors. It forms dimeric complexes.

The protein localises to the plastid. It localises to the chloroplast thylakoid membrane. May control the interaction of photosystem II (PSII) cores with the light-harvesting antenna, regulates electron flow through the 2 photosystem reaction centers. PSII is a light-driven water plastoquinone oxidoreductase, using light energy to abstract electrons from H(2)O, generating a proton gradient subsequently used for ATP formation. The sequence is that of Photosystem II reaction center protein Z from Euglena gracilis.